Here is a 607-residue protein sequence, read N- to C-terminus: LRR receptor kinase SERK2 (607 aa).

A signal peptide spans 1 to 21 (MRELRVAVLIIAVSLPSFSAS). Residues 22–219 (DRQGDALYDM…QSGSHSSKIG (198 aa)) lie on the Extracellular side of the membrane. 2 N-linked (GlcNAc...) asparagine glycosylation sites follow: Asn-36 and Asn-110. 4 LRR repeats span residues 87–110 (LKYL…QFGN), 111–135 (LSSL…LGQL), 136–159 (SKLQ…LAKI), and 160–183 (SSLT…LFQV). N-linked (GlcNAc...) asparagine glycans are attached at residues Asn-149, Asn-171, Asn-187, and Asn-206. The helical transmembrane segment at 220–240 (IVLGTVGGVIGLLIVAALFLF) threads the bilayer. Residues 241–607 (CKGRRKSHLR…QEAIELSGGR (367 aa)) are Cytoplasmic-facing. The Protein kinase domain maps to 284–563 (FSERNVLGQG…VVRMLEGEGL (280 aa)). ATP is bound by residues 290–298 (LGQGGFGKV) and Lys-312. Asp-411 functions as the Proton acceptor in the catalytic mechanism.

Belongs to the protein kinase superfamily. Ser/Thr protein kinase family.

The protein resides in the cell membrane. The enzyme catalyses L-seryl-[protein] + ATP = O-phospho-L-seryl-[protein] + ADP + H(+). The catalysed reaction is L-threonyl-[protein] + ATP = O-phospho-L-threonyl-[protein] + ADP + H(+). Its function is as follows. May be involved in the regulation of plant growth through the brassinosteroid (BR) signaling pathway. This chain is LRR receptor kinase SERK2, found in Oryza sativa subsp. japonica (Rice).